Consider the following 644-residue polypeptide: uncharacterized protein (644 aa).

Disordered regions lie at residues 1-35 (MSSH…EYCS) and 48-106 (GNSH…SHHN). Position 28 is a phosphoserine (S28). The span at 58–70 (NGASSSNNNVAKS) shows a compositional bias: low complexity. Residues 83–106 (YDSTSNSNEPISFNEPDSSNSHHN) are compositionally biased toward polar residues. 12 helical membrane passes run 131-151 (ILPL…PLLF), 190-210 (AAFG…YGTM), 218-238 (LVLF…LYQS), 245-265 (YFVL…TVVA), 286-306 (LNFA…GFIV), 314-334 (YVFY…WLIL), 398-418 (VLLA…MGLL), 435-455 (LILS…FPLL), 522-542 (VWNA…LAVA), 546-566 (VALF…PCVQ), 583-603 (AAFA…YAFV), and 614-634 (NMIF…IFFM).

The protein localises to the membrane. This is an uncharacterized protein from Schizosaccharomyces pombe (strain 972 / ATCC 24843) (Fission yeast).